The chain runs to 167 residues: SAR-endolysin (167 aa).

The helical; Signal-anchor for type II membrane protein transmembrane segment at 11–31 (VIAAISGGAIAIASVLITGPG) threads the bilayer. Residues Glu-37 and Asp-46 each act as proton donor/acceptor in the active site.

This sequence belongs to the glycosyl hydrolase 24 family.

Its subcellular location is the host cell inner membrane. The enzyme catalyses Hydrolysis of (1-&gt;4)-beta-linkages between N-acetylmuramic acid and N-acetyl-D-glucosamine residues in a peptidoglycan and between N-acetyl-D-glucosamine residues in chitodextrins.. Signal-arrest-release (SAR) endolysin with lysozyme activity that degrades host peptidoglycans and participates with the pinholin and spanin proteins in the sequential events which lead to programmed host cell lysis releasing the mature viral particles. Once the pinholin has permeabilized the host cell membrane, the SAR-endolysin is released into the periplasm where it breaks down the peptidoglycan layer. This chain is SAR-endolysin (19), found in Bacteriophage PS34.